The sequence spans 383 residues: Pentatricopeptide repeat-containing protein 2, mitochondrial (383 aa).

A PPR repeat occupies 161-195; sequence TSFNILMDMLFIKGKYKSALEVLIEMKNQNVKFTT. Position 377 is a phosphoserine (serine 377).

This sequence belongs to the PTCD2 family.

It localises to the mitochondrion. Involved in mitochondrial RNA maturation and mitochondrial respiratory chain function. The chain is Pentatricopeptide repeat-containing protein 2, mitochondrial (PTCD2) from Pongo abelii (Sumatran orangutan).